A 290-amino-acid chain; its full sequence is Nucleotide-binding protein BPP4038 (290 aa).

9 to 16 lines the ATP pocket; it reads GISGSGKS. 58–61 is a GTP binding site; the sequence is DVRS.

This sequence belongs to the RapZ-like family.

Displays ATPase and GTPase activities. In Bordetella parapertussis (strain 12822 / ATCC BAA-587 / NCTC 13253), this protein is Nucleotide-binding protein BPP4038.